Consider the following 442-residue polypeptide: D-serine dehydratase (442 aa).

At lysine 118 the chain carries N6-(pyridoxal phosphate)lysine.

The protein belongs to the serine/threonine dehydratase family. DsdA subfamily. Monomer. It depends on pyridoxal 5'-phosphate as a cofactor.

It carries out the reaction D-serine = pyruvate + NH4(+). This Escherichia fergusonii (strain ATCC 35469 / DSM 13698 / CCUG 18766 / IAM 14443 / JCM 21226 / LMG 7866 / NBRC 102419 / NCTC 12128 / CDC 0568-73) protein is D-serine dehydratase.